A 274-amino-acid polypeptide reads, in one-letter code: Large ribosomal subunit protein uL2cz/uL2cy (274 aa).

The interval 224–274 (NPVDHPHGGGEGRAPIGRKKPTTPWGYPALGRRSRKRNKYSDNLILRRRSK) is disordered.

The protein belongs to the universal ribosomal protein uL2 family. Part of the 50S ribosomal subunit.

Its subcellular location is the plastid. The protein localises to the chloroplast. The chain is Large ribosomal subunit protein uL2cz/uL2cy (rpl2-A) from Panax ginseng (Korean ginseng).